The chain runs to 230 residues: Urease accessory protein UreF (230 aa).

Belongs to the UreF family. In terms of assembly, ureD, UreF and UreG form a complex that acts as a GTP-hydrolysis-dependent molecular chaperone, activating the urease apoprotein by helping to assemble the nickel containing metallocenter of UreC. The UreE protein probably delivers the nickel.

It is found in the cytoplasm. Functionally, required for maturation of urease via the functional incorporation of the urease nickel metallocenter. This is Urease accessory protein UreF from Polynucleobacter asymbioticus (strain DSM 18221 / CIP 109841 / QLW-P1DMWA-1) (Polynucleobacter necessarius subsp. asymbioticus).